A 264-amino-acid chain; its full sequence is Thiazole synthase (264 aa).

Residue Lys-100 is the Schiff-base intermediate with DXP of the active site. 1-deoxy-D-xylulose 5-phosphate is bound by residues Gly-161, 187-188 (AG), and 209-210 (NT).

The protein belongs to the ThiG family. As to quaternary structure, homotetramer. Forms heterodimers with either ThiH or ThiS.

Its subcellular location is the cytoplasm. It catalyses the reaction [ThiS sulfur-carrier protein]-C-terminal-Gly-aminoethanethioate + 2-iminoacetate + 1-deoxy-D-xylulose 5-phosphate = [ThiS sulfur-carrier protein]-C-terminal Gly-Gly + 2-[(2R,5Z)-2-carboxy-4-methylthiazol-5(2H)-ylidene]ethyl phosphate + 2 H2O + H(+). Its pathway is cofactor biosynthesis; thiamine diphosphate biosynthesis. In terms of biological role, catalyzes the rearrangement of 1-deoxy-D-xylulose 5-phosphate (DXP) to produce the thiazole phosphate moiety of thiamine. Sulfur is provided by the thiocarboxylate moiety of the carrier protein ThiS. In vitro, sulfur can be provided by H(2)S. In Nitrosospira multiformis (strain ATCC 25196 / NCIMB 11849 / C 71), this protein is Thiazole synthase.